The primary structure comprises 85 residues: Putative defensin-like protein 258 (85 aa).

Positions 1-25 (MINVSLKRSLLIFISVITSNIGSEA) are cleaved as a signal peptide. Intrachain disulfides connect C57/C75, C63/C82, and C67/C84.

This sequence belongs to the DEFL family.

The protein resides in the secreted. This is Putative defensin-like protein 258 from Arabidopsis thaliana (Mouse-ear cress).